The primary structure comprises 425 residues: Bifunctional phosphoribosylaminoimidazole carboxylase/phosphoribosylaminoimidazole succinocarboxamide synthetase (425 aa).

A2 carries the post-translational modification N-acetylalanine. Residues 2 to 260 (ATAEVLNIGR…WVADRVELLL (259 aa)) are SAICAR synthetase domain. Phosphotyrosine is present on Y22. S27 carries the phosphoserine modification. Residue K36 is modified to N6-acetyllysine. A Phosphoserine modification is found at S107. Position 238 is a phosphothreonine (T238). Residue K247 is modified to N6-acetyllysine. Positions 261 to 266 (KSNSQC) are linker. The interval 267–425 (RVVVLMGSTS…ADKKIRECNL (159 aa)) is AIR carboxylase domain. S274 carries the phosphoserine modification. Position 332 (S332) interacts with CO2.

In the N-terminal section; belongs to the SAICAR synthetase family. This sequence in the C-terminal section; belongs to the AIR carboxylase family. Class II subfamily. In terms of assembly, homooctamer.

It carries out the reaction 5-amino-1-(5-phospho-D-ribosyl)imidazole-4-carboxylate + L-aspartate + ATP = (2S)-2-[5-amino-1-(5-phospho-beta-D-ribosyl)imidazole-4-carboxamido]succinate + ADP + phosphate + 2 H(+). The enzyme catalyses 5-amino-1-(5-phospho-D-ribosyl)imidazole-4-carboxylate + H(+) = 5-amino-1-(5-phospho-beta-D-ribosyl)imidazole + CO2. Its pathway is purine metabolism; IMP biosynthesis via de novo pathway; 5-amino-1-(5-phospho-D-ribosyl)imidazole-4-carboxamide from 5-amino-1-(5-phospho-D-ribosyl)imidazole-4-carboxylate: step 1/2. It functions in the pathway purine metabolism; IMP biosynthesis via de novo pathway; 5-amino-1-(5-phospho-D-ribosyl)imidazole-4-carboxylate from 5-amino-1-(5-phospho-D-ribosyl)imidazole (carboxylase route): step 1/1. In terms of biological role, bifunctional phosphoribosylaminoimidazole carboxylase and phosphoribosylaminoimidazole succinocarboxamide synthetase catalyzing two reactions of the de novo purine biosynthetic pathway. The chain is Bifunctional phosphoribosylaminoimidazole carboxylase/phosphoribosylaminoimidazole succinocarboxamide synthetase from Rattus norvegicus (Rat).